The chain runs to 246 residues: Biosynthetic peptidoglycan transglycosylase (246 aa).

The chain crosses the membrane as a helical span at residues 28–48; it reads FALFLVLFLSSVVLFRFVPVP.

The protein belongs to the glycosyltransferase 51 family.

It localises to the cell inner membrane. The enzyme catalyses [GlcNAc-(1-&gt;4)-Mur2Ac(oyl-L-Ala-gamma-D-Glu-L-Lys-D-Ala-D-Ala)](n)-di-trans,octa-cis-undecaprenyl diphosphate + beta-D-GlcNAc-(1-&gt;4)-Mur2Ac(oyl-L-Ala-gamma-D-Glu-L-Lys-D-Ala-D-Ala)-di-trans,octa-cis-undecaprenyl diphosphate = [GlcNAc-(1-&gt;4)-Mur2Ac(oyl-L-Ala-gamma-D-Glu-L-Lys-D-Ala-D-Ala)](n+1)-di-trans,octa-cis-undecaprenyl diphosphate + di-trans,octa-cis-undecaprenyl diphosphate + H(+). The protein operates within cell wall biogenesis; peptidoglycan biosynthesis. Peptidoglycan polymerase that catalyzes glycan chain elongation from lipid-linked precursors. This chain is Biosynthetic peptidoglycan transglycosylase, found in Pasteurella multocida (strain Pm70).